Consider the following 291-residue polypeptide: 3-hydroxy-5-phosphonooxypentane-2,4-dione thiolase (291 aa).

The active-site Schiff-base intermediate with substrate is the Lys203.

This sequence belongs to the DeoC/FbaB aldolase family. Homodecamer.

It localises to the cytoplasm. The catalysed reaction is dihydroxyacetone phosphate + acetyl-CoA = 3-hydroxy-2,4-dioxopentyl phosphate + CoA. In terms of biological role, involved in the degradation of phospho-AI-2, thereby terminating induction of the lsr operon and closing the AI-2 signaling cycle. Catalyzes the transfer of an acetyl moiety from 3-hydroxy-5-phosphonooxypentane-2,4-dione to CoA to form glycerone phosphate and acetyl-CoA. The sequence is that of 3-hydroxy-5-phosphonooxypentane-2,4-dione thiolase from Photorhabdus laumondii subsp. laumondii (strain DSM 15139 / CIP 105565 / TT01) (Photorhabdus luminescens subsp. laumondii).